Reading from the N-terminus, the 228-residue chain is ATP-dependent dethiobiotin synthetase BioD (228 aa).

ATP is bound at residue Glu-12 to Thr-17. Residue Thr-16 coordinates Mg(2+). Residue Lys-37 is part of the active site. Ser-41 is a substrate binding site. ATP contacts are provided by residues Asp-54, Glu-116 to Gly-119, and Pro-205 to Leu-207. Mg(2+) contacts are provided by Asp-54 and Glu-116.

Belongs to the dethiobiotin synthetase family. In terms of assembly, homodimer. It depends on Mg(2+) as a cofactor.

It is found in the cytoplasm. The enzyme catalyses (7R,8S)-7,8-diammoniononanoate + CO2 + ATP = (4R,5S)-dethiobiotin + ADP + phosphate + 3 H(+). The protein operates within cofactor biosynthesis; biotin biosynthesis; biotin from 7,8-diaminononanoate: step 1/2. Functionally, catalyzes a mechanistically unusual reaction, the ATP-dependent insertion of CO2 between the N7 and N8 nitrogen atoms of 7,8-diaminopelargonic acid (DAPA, also called 7,8-diammoniononanoate) to form a ureido ring. The polypeptide is ATP-dependent dethiobiotin synthetase BioD (Pseudomonas aeruginosa (strain LESB58)).